The following is a 167-amino-acid chain: RNA pyrophosphohydrolase (167 aa).

The Nudix hydrolase domain maps to 8 to 159 (PYRTCVGVML…KRPVYERVVK (152 aa)). The short motif at 47–68 (GGVDPGEDTWAAAKRELYEETS) is the Nudix box element.

It belongs to the Nudix hydrolase family. RppH subfamily. Requires a divalent metal cation as cofactor.

Its function is as follows. Accelerates the degradation of transcripts by removing pyrophosphate from the 5'-end of triphosphorylated RNA, leading to a more labile monophosphorylated state that can stimulate subsequent ribonuclease cleavage. The polypeptide is RNA pyrophosphohydrolase (Bradyrhizobium diazoefficiens (strain JCM 10833 / BCRC 13528 / IAM 13628 / NBRC 14792 / USDA 110)).